The sequence spans 450 residues: MKTVTEFQNKNILVLGIAKSGYAAATLLQKLGANVIVNDGKPLAENVLAAELQAKGMDVVCGGHPLELLERNISLVVKNPGIPYSNPILVAAKEKQIPIVTEVELAYRISEAPFVGITGSNGKTTTTMLTFEMLKEGQKHPVIAGNIGTVACEVAQDAKENEVVVTELSSFQLMGVELFQPKIAAFLNLFEAHLDYHGTKKEYGLAKANIFKNQTENDYSVINADDADVMALSAYSKGQKVLFSTTKEIEDGACIKDNALYFKGEKVVEVGDIVLPGQHNLENILAAMSIAKLLGVSNKAITAVLKRFTGVKHRLEYVTTINNRKFYNDSKATNMLATEKALSAFTQPTVLLAGGLDRGNEFDDLIPYFKNVKAIVTFGQTAPKLVRAAEKAGLDTIESVDTLDEAVVKAYAHSTDGDVILLSPACASWDQFKTFEERGDIFIQAVHKLI.

119 to 125 is a binding site for ATP; the sequence is GSNGKTT.

This sequence belongs to the MurCDEF family.

Its subcellular location is the cytoplasm. The enzyme catalyses UDP-N-acetyl-alpha-D-muramoyl-L-alanine + D-glutamate + ATP = UDP-N-acetyl-alpha-D-muramoyl-L-alanyl-D-glutamate + ADP + phosphate + H(+). It participates in cell wall biogenesis; peptidoglycan biosynthesis. Its function is as follows. Cell wall formation. Catalyzes the addition of glutamate to the nucleotide precursor UDP-N-acetylmuramoyl-L-alanine (UMA). This chain is UDP-N-acetylmuramoylalanine--D-glutamate ligase, found in Bacillus cereus (strain AH187).